A 558-amino-acid polypeptide reads, in one-letter code: D-xylose-proton symporter-like 3, chloroplastic (558 aa).

A chloroplast-targeting transit peptide spans 1-31 (MAFAVSVQSHFAIRALKRDHFKNPSPRTFCS). 12 helical membrane-spanning segments follow: residues 98 to 118 (VILP…DIGA), 146 to 166 (LVVS…YGVA), 175 to 195 (LIIA…APDL), 197 to 217 (ILLV…HGAP), 238 to 258 (LFIV…IDVV), 264 to 284 (MYGF…SLPA), 359 to 379 (ALTI…PSVL), 400 to 420 (VSVI…AKVD), 426 to 446 (PLLI…SAYY), 449 to 469 (LGGF…CYQI), 491 to 511 (GISL…FAFS), and 522 to 542 (LFLL…LVVP).

This sequence belongs to the major facilitator superfamily. Sugar transporter (TC 2.A.1.1) family.

It localises to the plastid. The protein resides in the chloroplast membrane. In Arabidopsis thaliana (Mouse-ear cress), this protein is D-xylose-proton symporter-like 3, chloroplastic.